A 399-amino-acid chain; its full sequence is Argininosuccinate synthase (399 aa).

ATP-binding positions include 10 to 18 (AYSGGVDTS) and A38. Y89 is a binding site for L-citrulline. An ATP-binding site is contributed by G119. 3 residues coordinate L-aspartate: T121, N125, and D126. Residue N125 coordinates L-citrulline. L-citrulline is bound by residues R129, S177, S186, E262, and Y274.

Belongs to the argininosuccinate synthase family. Type 1 subfamily. Homotetramer.

The protein resides in the cytoplasm. The catalysed reaction is L-citrulline + L-aspartate + ATP = 2-(N(omega)-L-arginino)succinate + AMP + diphosphate + H(+). It participates in amino-acid biosynthesis; L-arginine biosynthesis; L-arginine from L-ornithine and carbamoyl phosphate: step 2/3. The polypeptide is Argininosuccinate synthase (Picosynechococcus sp. (strain ATCC 27264 / PCC 7002 / PR-6) (Agmenellum quadruplicatum)).